Here is a 950-residue protein sequence, read N- to C-terminus: Glycine dehydrogenase (decarboxylating) (950 aa).

N6-(pyridoxal phosphate)lysine is present on Lys-698.

The protein belongs to the GcvP family. The glycine cleavage system is composed of four proteins: P, T, L and H. Requires pyridoxal 5'-phosphate as cofactor.

It carries out the reaction N(6)-[(R)-lipoyl]-L-lysyl-[glycine-cleavage complex H protein] + glycine + H(+) = N(6)-[(R)-S(8)-aminomethyldihydrolipoyl]-L-lysyl-[glycine-cleavage complex H protein] + CO2. In terms of biological role, the glycine cleavage system catalyzes the degradation of glycine. The P protein binds the alpha-amino group of glycine through its pyridoxal phosphate cofactor; CO(2) is released and the remaining methylamine moiety is then transferred to the lipoamide cofactor of the H protein. The sequence is that of Glycine dehydrogenase (decarboxylating) from Neisseria gonorrhoeae (strain NCCP11945).